The sequence spans 40 residues: Beta-defensin 2 (40 aa).

Disulfide bonds link C7–C36, C14–C29, and C19–C37.

The protein belongs to the beta-defensin family. Neutrophilic granules.

Its subcellular location is the secreted. Functionally, has bactericidal activity. Active against E.coli ML35 and S.aureus 502A. The chain is Beta-defensin 2 (DEFB2) from Bos taurus (Bovine).